A 405-amino-acid chain; its full sequence is Glucose-1-phosphate adenylyltransferase (405 aa).

Alpha-D-glucose 1-phosphate-binding positions include Tyr96, Gly161, 176–177, and Ser194; that span reads EK.

It belongs to the bacterial/plant glucose-1-phosphate adenylyltransferase family. In terms of assembly, homotetramer.

It catalyses the reaction alpha-D-glucose 1-phosphate + ATP + H(+) = ADP-alpha-D-glucose + diphosphate. The protein operates within glycan biosynthesis; glycogen biosynthesis. Its function is as follows. Involved in the biosynthesis of ADP-glucose, a building block required for the elongation reactions to produce glycogen. Catalyzes the reaction between ATP and alpha-D-glucose 1-phosphate (G1P) to produce pyrophosphate and ADP-Glc. This chain is Glucose-1-phosphate adenylyltransferase, found in Aliivibrio fischeri (strain ATCC 700601 / ES114) (Vibrio fischeri).